Consider the following 341-residue polypeptide: Anthranilate phosphoribosyltransferase (341 aa).

5-phospho-alpha-D-ribose 1-diphosphate is bound by residues glycine 80, 83-84, threonine 88, 90-93, 108-116, and serine 120; these read GD, NIST, and KHGNRAVSS. Glycine 80 contributes to the anthranilate binding site. Serine 92 is a Mg(2+) binding site. Asparagine 111 contributes to the anthranilate binding site. Residue arginine 166 participates in anthranilate binding. 2 residues coordinate Mg(2+): aspartate 225 and glutamate 226.

Belongs to the anthranilate phosphoribosyltransferase family. In terms of assembly, homodimer. It depends on Mg(2+) as a cofactor.

The enzyme catalyses N-(5-phospho-beta-D-ribosyl)anthranilate + diphosphate = 5-phospho-alpha-D-ribose 1-diphosphate + anthranilate. It participates in amino-acid biosynthesis; L-tryptophan biosynthesis; L-tryptophan from chorismate: step 2/5. Catalyzes the transfer of the phosphoribosyl group of 5-phosphorylribose-1-pyrophosphate (PRPP) to anthranilate to yield N-(5'-phosphoribosyl)-anthranilate (PRA). This chain is Anthranilate phosphoribosyltransferase, found in Brevibacillus brevis (strain 47 / JCM 6285 / NBRC 100599).